We begin with the raw amino-acid sequence, 102 residues long: Small ribosomal subunit protein uS10 (102 aa).

Belongs to the universal ribosomal protein uS10 family. In terms of assembly, part of the 30S ribosomal subunit.

Its function is as follows. Involved in the binding of tRNA to the ribosomes. In Mycoplasma mycoides subsp. mycoides SC (strain CCUG 32753 / NCTC 10114 / PG1), this protein is Small ribosomal subunit protein uS10.